A 942-amino-acid chain; its full sequence is Endoprotease bli-4 (942 aa).

The N-terminal stretch at Met-1 to Thr-22 is a signal peptide. Positions Ile-23 to Arg-116 are excised as a propeptide. Residues Asp-117–Ser-871 lie on the Lumenal side of the membrane. Position 124 (Asp-124) interacts with Ca(2+). Positions Pro-130–Phe-160 are disordered. The 316-residue stretch at Gln-168–Val-483 folds into the Peptidase S8 domain. A glycan (N-linked (GlcNAc...) asparagine) is linked at Asn-195. Asp-202 functions as the Charge relay system in the catalytic mechanism. Asp-203 is a substrate binding site. Ca(2+) is bound by residues Asp-211, Asp-223, Asp-228, and Asp-230. The interval Asp-211–Gly-242 is disordered. Asp-238–Asn-239 is a binding site for substrate. The active-site Charge relay system is His-241. Residues Leu-252, Asn-255, Gln-257, and Gly-259 each contribute to the Ca(2+) site. 2 cysteine pairs are disulfide-bonded: Cys-258/Cys-407 and Cys-350/Cys-380. Substrate contacts are provided by residues Glu-283, Ser-300 to Asp-305, Asp-311, and Ala-339 to Asn-342. Ca(2+) is bound at residue Asp-305. Ca(2+) is bound at residue Asp-348. 2 residues coordinate substrate: Asp-353 and Tyr-355. Glu-378 lines the Ca(2+) pocket. The active-site Charge relay system is Ser-415. Ser-415 is a binding site for substrate. The region spanning Thr-491 to Pro-629 is the P/Homo B domain. Cys-498 and Cys-527 form a disulfide bridge. Residue Asn-519 is glycosylated (N-linked (GlcNAc...) asparagine). FU repeat units lie at residues Asn-674 to Asp-723, Asp-725 to Asp-777, and Gly-804 to Ser-850. An N-linked (GlcNAc...) asparagine glycan is attached at Asn-868. The chain crosses the membrane as a helical span at residues Gly-872–Cys-892. The Cytoplasmic segment spans residues Lys-893–Val-942. The disordered stretch occupies residues Gly-922–Val-942. Over residues Asp-926 to Val-935 the composition is skewed to acidic residues.

This sequence belongs to the peptidase S8 family. Furin subfamily. Requires Ca(2+) as cofactor. As to expression, in larvae and adults, expressed in all hypodermal cells, vulva and ventral nerve cords. In terms of tissue distribution, most highly expressed isoform in the embryonic epidermis. Expressed primarily in the germline. As to expression, expressed primarily in pharyngeal epithelial cells.

Its subcellular location is the membrane. Serine endoprotease which cleaves proproteins at paired basic amino acids at the consensus RX(K/R)R motif. Involved in N-terminal processing of cuticle collagens and plays a role in cuticle biosynthesis. May cleave both sqt-3 and dpy-17 collagens to promote their secretion. Acts in ASEL sensory neurons to regulate high salt chemotaxis responses probably by cleaving insulin-like protein ins-6 into its mature and active form. Essential for embryonic and larval development. In terms of biological role, involved in cuticle biosynthesis but dispensable for larval development. This Caenorhabditis elegans protein is Endoprotease bli-4 (bli-4).